Consider the following 364-residue polypeptide: Chorismate synthase (364 aa).

The interval 41-60 (MQHDLDRRRPGTSRYTTARR) is disordered. 2 residues coordinate NADP(+): R48 and R54. FMN contacts are provided by residues 125-127 (RSS), 238-239 (NA), G278, 293-297 (KPTSS), and R319.

The protein belongs to the chorismate synthase family. In terms of assembly, homotetramer. The cofactor is FMNH2.

It catalyses the reaction 5-O-(1-carboxyvinyl)-3-phosphoshikimate = chorismate + phosphate. The protein operates within metabolic intermediate biosynthesis; chorismate biosynthesis; chorismate from D-erythrose 4-phosphate and phosphoenolpyruvate: step 7/7. Functionally, catalyzes the anti-1,4-elimination of the C-3 phosphate and the C-6 proR hydrogen from 5-enolpyruvylshikimate-3-phosphate (EPSP) to yield chorismate, which is the branch point compound that serves as the starting substrate for the three terminal pathways of aromatic amino acid biosynthesis. This reaction introduces a second double bond into the aromatic ring system. This Shewanella sp. (strain ANA-3) protein is Chorismate synthase.